Here is a 483-residue protein sequence, read N- to C-terminus: Aspartyl/glutamyl-tRNA(Asn/Gln) amidotransferase subunit B (483 aa).

Belongs to the GatB/GatE family. GatB subfamily. Heterotrimer of A, B and C subunits.

It catalyses the reaction L-glutamyl-tRNA(Gln) + L-glutamine + ATP + H2O = L-glutaminyl-tRNA(Gln) + L-glutamate + ADP + phosphate + H(+). The catalysed reaction is L-aspartyl-tRNA(Asn) + L-glutamine + ATP + H2O = L-asparaginyl-tRNA(Asn) + L-glutamate + ADP + phosphate + 2 H(+). In terms of biological role, allows the formation of correctly charged Asn-tRNA(Asn) or Gln-tRNA(Gln) through the transamidation of misacylated Asp-tRNA(Asn) or Glu-tRNA(Gln) in organisms which lack either or both of asparaginyl-tRNA or glutaminyl-tRNA synthetases. The reaction takes place in the presence of glutamine and ATP through an activated phospho-Asp-tRNA(Asn) or phospho-Glu-tRNA(Gln). The chain is Aspartyl/glutamyl-tRNA(Asn/Gln) amidotransferase subunit B from Anaplasma phagocytophilum (strain HZ).